We begin with the raw amino-acid sequence, 140 residues long: Putative pre-16S rRNA nuclease (140 aa).

This sequence belongs to the YqgF nuclease family.

It localises to the cytoplasm. In terms of biological role, could be a nuclease involved in processing of the 5'-end of pre-16S rRNA. The chain is Putative pre-16S rRNA nuclease from Yersinia pseudotuberculosis serotype IB (strain PB1/+).